Consider the following 485-residue polypeptide: tRNA sulfurtransferase (485 aa).

The THUMP domain maps to glutamate 63–arginine 167. ATP contacts are provided by residues leucine 185 to isoleucine 186, lysine 267, glycine 289, and glutamine 298. The cysteines at positions 346 and 458 are disulfide-linked. Residues valine 406–proline 484 form the Rhodanese domain. Residue cysteine 458 is the Cysteine persulfide intermediate of the active site.

The protein belongs to the ThiI family.

It localises to the cytoplasm. It carries out the reaction [ThiI sulfur-carrier protein]-S-sulfanyl-L-cysteine + a uridine in tRNA + 2 reduced [2Fe-2S]-[ferredoxin] + ATP + H(+) = [ThiI sulfur-carrier protein]-L-cysteine + a 4-thiouridine in tRNA + 2 oxidized [2Fe-2S]-[ferredoxin] + AMP + diphosphate. The enzyme catalyses [ThiS sulfur-carrier protein]-C-terminal Gly-Gly-AMP + S-sulfanyl-L-cysteinyl-[cysteine desulfurase] + AH2 = [ThiS sulfur-carrier protein]-C-terminal-Gly-aminoethanethioate + L-cysteinyl-[cysteine desulfurase] + A + AMP + 2 H(+). Its pathway is cofactor biosynthesis; thiamine diphosphate biosynthesis. Its function is as follows. Catalyzes the ATP-dependent transfer of a sulfur to tRNA to produce 4-thiouridine in position 8 of tRNAs, which functions as a near-UV photosensor. Also catalyzes the transfer of sulfur to the sulfur carrier protein ThiS, forming ThiS-thiocarboxylate. This is a step in the synthesis of thiazole, in the thiamine biosynthesis pathway. The sulfur is donated as persulfide by IscS. The protein is tRNA sulfurtransferase of Shewanella loihica (strain ATCC BAA-1088 / PV-4).